The chain runs to 213 residues: Response regulator GacA (213 aa).

In terms of domain architecture, Response regulatory spans 3-119 (RVLVVDDHDL…EMVQAIRLVF (117 aa)). At Asp54 the chain carries 4-aspartylphosphate. The HTH luxR-type domain occupies 142–207 (SDSPFDALSE…ELTLLAVRHG (66 aa)). The segment at residues 166-185 (VQIISDKLCLSPKTVNTYRY) is a DNA-binding region (H-T-H motif).

Phosphorylated by GacS.

Member of the two-component regulatory system GacA/GacS which controls the expression of secondary metabolites and extracellular products. Acts (probably primarily) by activating expression of CsrA1 and CsrA2 antagonist small RNAs (sRNA) RsmX, RsmY and RsmZ which bind to and prevent translation repression by CsrA1 and CsrA2. Involved in the regulation of secondary metabolism and in the synthesis of the antifungal factors cyanide, 2,4-diacetylphloroglucinol and pyoluteorin. Involved in synthesis of the autoinducing signal (unrelated to N-acylhomoserine lactones, induces the Gac/Csr cascade). Exercises positive post-transcriptional control over the hcnABC and aprA genes; acts upstream of CsrA2 (rsmA). Controls expression of csrA1 (rsmE) and csrA2. In Pseudomonas protegens (strain DSM 19095 / LMG 27888 / CFBP 6595 / CHA0), this protein is Response regulator GacA.